A 167-amino-acid polypeptide reads, in one-letter code: NAD(P)H-quinone oxidoreductase subunit I, chloroplastic (167 aa).

2 consecutive 4Fe-4S ferredoxin-type domains span residues Gly55 to Ile84 and Lys95 to Glu124. [4Fe-4S] cluster contacts are provided by Cys64, Cys67, Cys70, Cys74, Cys104, Cys107, Cys110, and Cys114.

The protein belongs to the complex I 23 kDa subunit family. In terms of assembly, NDH is composed of at least 16 different subunits, 5 of which are encoded in the nucleus. The cofactor is [4Fe-4S] cluster.

The protein resides in the plastid. It is found in the chloroplast thylakoid membrane. It catalyses the reaction a plastoquinone + NADH + (n+1) H(+)(in) = a plastoquinol + NAD(+) + n H(+)(out). It carries out the reaction a plastoquinone + NADPH + (n+1) H(+)(in) = a plastoquinol + NADP(+) + n H(+)(out). In terms of biological role, NDH shuttles electrons from NAD(P)H:plastoquinone, via FMN and iron-sulfur (Fe-S) centers, to quinones in the photosynthetic chain and possibly in a chloroplast respiratory chain. The immediate electron acceptor for the enzyme in this species is believed to be plastoquinone. Couples the redox reaction to proton translocation, and thus conserves the redox energy in a proton gradient. The protein is NAD(P)H-quinone oxidoreductase subunit I, chloroplastic of Adiantum capillus-veneris (Maidenhair fern).